Reading from the N-terminus, the 304-residue chain is Olfactory receptor 52A4 (304 aa).

Topologically, residues 1-32 are extracellular; sequence MALPITNGTLFMPFVLTFIGIPGFESVQCWIG. N-linked (GlcNAc...) asparagine glycosylation is present at Asn7. A helical transmembrane segment spans residues 33–53; the sequence is IPFCATYVIALIGNSLLLIII. Residues 54-61 lie on the Cytoplasmic side of the membrane; it reads KSEPSLHE. The helical transmembrane segment at 62-82 threads the bilayer; sequence PMYIFLATLGATDISLSTSIV. Over 83 to 103 the chain is Extracellular; sequence PKMLDIFWFHLPEIYFDACLF. Cys101 and Cys184 are oxidised to a cystine. A helical membrane pass occupies residues 104–124; sequence QMWLIHTFQGIESGVLLAMAL. The Cytoplasmic segment spans residues 125-146; that stretch reads DRCVAICYPLRRAIVFTRQLVT. The chain crosses the membrane as a helical span at residues 147–167; that stretch reads YIVVGVTLRPAILVIPCLLLI. Topologically, residues 168-203 are extracellular; that stretch reads KCHLKLYRTKLIYHTYCERVALVKLATEDVYINKVY. A helical membrane pass occupies residues 204 to 224; sequence GILGAFIVGGLDFIFITLSYI. The Cytoplasmic portion of the chain corresponds to 225-255; sequence QIFITVFHLPLKEARLKVFNTCIPHIYVFFQ. Residues 256–276 traverse the membrane as a helical segment; sequence FYLLAFFFIFYSQIWILYPII. The Extracellular segment spans residues 277 to 279; that stretch reads CTY. The helical transmembrane segment at 280-300 threads the bilayer; that stretch reads HLVQSLPTGPTIPQPLYLWVK. The Cytoplasmic segment spans residues 301–304; it reads DQTH.

It belongs to the G-protein coupled receptor 1 family.

It is found in the cell membrane. Odorant receptor. The chain is Olfactory receptor 52A4 from Homo sapiens (Human).